The following is a 120-amino-acid chain: Large ribosomal subunit protein uL18 (120 aa).

The interval 1-22 is disordered; that stretch reads MKLTRRESKNRRHRRVRGKVVG. A compositionally biased stretch (basic residues) spans 8-18; it reads SKNRRHRRVRG.

This sequence belongs to the universal ribosomal protein uL18 family. As to quaternary structure, part of the 50S ribosomal subunit; part of the 5S rRNA/L5/L18/L25 subcomplex. Contacts the 5S and 23S rRNAs.

Its function is as follows. This is one of the proteins that bind and probably mediate the attachment of the 5S RNA into the large ribosomal subunit, where it forms part of the central protuberance. The sequence is that of Large ribosomal subunit protein uL18 from Nostoc punctiforme (strain ATCC 29133 / PCC 73102).